The following is a 639-amino-acid chain: Ubiquitin-like modifier-activating enzyme ATG7 (639 aa).

Positions Gly-322–Gly-327 match the GXGXXG motif motif. Cys-502 functions as the Glycyl thioester intermediate in the catalytic mechanism.

Belongs to the ATG7 family. Homodimer.

The protein resides in the cytoplasm. The protein localises to the preautophagosomal structure. Its function is as follows. E1-like activating enzyme involved in the 2 ubiquitin-like systems required for cytoplasm to vacuole transport (Cvt) and autophagy. Activates ATG12 for its conjugation with ATG5 and ATG8 for its conjugation with phosphatidylethanolamine. Both systems are needed for the ATG8 association to Cvt vesicles and autophagosomes membranes. Autophagy is essential for maintenance of amino acid levels and protein synthesis under nitrogen starvation. Required for selective autophagic degradation of the nucleus (nucleophagy) as well as for mitophagy which contributes to regulate mitochondrial quantity and quality by eliminating the mitochondria to a basal level to fulfill cellular energy requirements and preventing excess ROS production. Plays a role in the regulation of filamentous growth and chronological longevity. In Candida albicans (strain SC5314 / ATCC MYA-2876) (Yeast), this protein is Ubiquitin-like modifier-activating enzyme ATG7 (APG7).